Consider the following 184-residue polypeptide: MKSLLLLTTLLVPLHLGMAWSAKYAVDCPEHCDKTECRSSLRCKRTVLDDCGCCQVCAAGPGETCYRTVSGMDGVKCGPGLKCHFYSEEDDFGDEFGICKDCPYGTFGMECKETCNCQSGICDRVTGRCLDFPFFQYAAAKSPSRTSASHTERDSASGDGNAVREEIGEGNAARPSVMKWLNPR.

The N-terminal stretch at 1–21 (MKSLLLLTTLLVPLHLGMAWS) is a signal peptide. The IGFBP N-terminal domain maps to 24–102 (YAVDCPEHCD…GDEFGICKDC (79 aa)). 6 disulfide bridges follow: Cys28/Cys51, Cys32/Cys53, Cys37/Cys54, Cys43/Cys57, Cys65/Cys83, and Cys77/Cys99. Residues 145–184 (RTSASHTERDSASGDGNAVREEIGEGNAARPSVMKWLNPR) are disordered. Basic and acidic residues predominate over residues 150-167 (HTERDSASGDGNAVREEI). Ser157 carries O-linked (Xyl...) (chondroitin sulfate) serine glycosylation.

O-glycosylated; contains chondroitin sulfate and dermatan sulfate.

It is found in the secreted. Its function is as follows. Involved in angiogenesis; promotes angiogenic sprouting. May have potent implications in lung endothelial cell-leukocyte interactions. The polypeptide is Endothelial cell-specific molecule 1 (Esm1) (Mus musculus (Mouse)).